The chain runs to 349 residues: Phosphoribosylformylglycinamidine cyclo-ligase (349 aa).

Belongs to the AIR synthase family.

It is found in the cytoplasm. It catalyses the reaction 2-formamido-N(1)-(5-O-phospho-beta-D-ribosyl)acetamidine + ATP = 5-amino-1-(5-phospho-beta-D-ribosyl)imidazole + ADP + phosphate + H(+). It participates in purine metabolism; IMP biosynthesis via de novo pathway; 5-amino-1-(5-phospho-D-ribosyl)imidazole from N(2)-formyl-N(1)-(5-phospho-D-ribosyl)glycinamide: step 2/2. The chain is Phosphoribosylformylglycinamidine cyclo-ligase from Psychrobacter arcticus (strain DSM 17307 / VKM B-2377 / 273-4).